The sequence spans 37 residues: Cytochrome b6-f complex subunit 5 (37 aa).

A helical transmembrane segment spans residues 5-25; that stretch reads ILLGIVLGMVVVTLAGLFVAA.

The protein belongs to the PetG family. As to quaternary structure, the 4 large subunits of the cytochrome b6-f complex are cytochrome b6, subunit IV (17 kDa polypeptide, PetD), cytochrome f and the Rieske protein, while the 4 small subunits are PetG, PetL, PetM and PetN. The complex functions as a dimer.

Its subcellular location is the cellular thylakoid membrane. In terms of biological role, component of the cytochrome b6-f complex, which mediates electron transfer between photosystem II (PSII) and photosystem I (PSI), cyclic electron flow around PSI, and state transitions. PetG is required for either the stability or assembly of the cytochrome b6-f complex. This chain is Cytochrome b6-f complex subunit 5, found in Synechococcus sp. (strain JA-2-3B'a(2-13)) (Cyanobacteria bacterium Yellowstone B-Prime).